The primary structure comprises 366 residues: RISC-loading complex subunit TARBP2 (366 aa).

Sufficient for interaction with PRKRA stretches follow at residues 22–105, 152–234, and 287–366; these read MLAA…EPAL, SPQQ…DARD, and LGAL…AGSK. The 68-residue stretch at 30–97 folds into the DRBM 1 domain; sequence TPISLLQEYG…AEVALKHLKG (68 aa). A disordered region spans residues 135-158; it reads PSAVPTRSSPMEVQPPVSPQQSEC. Ser152 is modified (phosphoserine). DRBM domains lie at 159-227 and 293-361; these read NPVG…RVHT and ACCS…YLKI. A sufficient for interaction with DICER1 region spans residues 228–366; sequence VPLDARDGNE…QYLKIMAGSK (139 aa).

Belongs to the TARBP2 family. Self-associates. Component of the RISC loading complex (RLC), or micro-RNA (miRNA) loading complex (miRLC), which is composed of DICER1, AGO2 and TARBP2. Note that the trimeric RLC/miRLC is also referred to as RISC. Interacts with EIF2AK2/PKR and inhibits its protein kinase activity. Interacts with DHX9 and PRKRA. Interacts with DICER1, AGO2, MOV10, EIF6 and RPL7A (60S ribosome subunit); they form a large RNA-induced silencing complex (RISC). Interacts with IRF7; this interaction prevents IRF7 phosphorylation and activation.

It is found in the cytoplasm. It localises to the perinuclear region. Its subcellular location is the nucleus. Required for formation of the RNA induced silencing complex (RISC). Component of the RISC loading complex (RLC), also known as the micro-RNA (miRNA) loading complex (miRLC), which is composed of DICER1, AGO2 and TARBP2. Within the RLC/miRLC, DICER1 and TARBP2 are required to process precursor miRNAs (pre-miRNAs) to mature miRNAs and then load them onto AGO2. AGO2 bound to the mature miRNA constitutes the minimal RISC and may subsequently dissociate from DICER1 and TARBP2. May also play a role in the production of short interfering RNAs (siRNAs) from double-stranded RNA (dsRNA) by DICER1. Binds in vitro to the PRM1 3'-UTR. Seems to act as a repressor of translation. For some pre-miRNA substrates, may also alter the choice of cleavage site by DICER1. Negatively regulates IRF7-mediated IFN-beta signaling triggered by viral infection by inhibiting the phosphorylation of IRF7 and promoting its 'Lys'-48-linked ubiquitination and degradation. In Bos taurus (Bovine), this protein is RISC-loading complex subunit TARBP2.